The sequence spans 412 residues: Adherens junction-associated protein 1 (412 aa).

The signal sequence occupies residues 1–43 (MWIQQLLGLSSMSIRWPGRSLGSHAWILIAMLQLAVDFPSCDS). Residues 44–284 (LGPGPEFRLL…GETSGLAVHQ (241 aa)) lie on the Extracellular side of the membrane. Disordered stretches follow at residues 62 to 175 (LWSL…GRPT) and 243 to 271 (DPWK…IQPP). Positions 121–146 (PPAATRSSPSLASATASSSIVTAGAA) are enriched in low complexity. The span at 160–171 (HDTEFNDFDFRG) shows a compositional bias: basic and acidic residues. Low complexity predominate over residues 248 to 263 (TPVGVSTTEPSTSPSS). Residues 285-305 (IITITVSLIMVIAALITTLVL) form a helical membrane-spanning segment. Positions 305–412 (LKNCCAPSGH…VSEKWFEISC (108 aa)) are targeting signals. Residues 306–412 (KNCCAPSGHT…VSEKWFEISC (107 aa)) lie on the Cytoplasmic side of the membrane.

In terms of assembly, forms a complex with CDH1 and CTNNB1; interacts directly with CTNNB1. Interacts with AP1M2 and isoform 2 of BSG/CD147.

The protein resides in the basolateral cell membrane. It is found in the apical cell membrane. The protein localises to the cell junction. Its subcellular location is the adherens junction. Its function is as follows. Plays a role in cell adhesion and cell migration. The protein is Adherens junction-associated protein 1 (Ajap1) of Mus musculus (Mouse).